We begin with the raw amino-acid sequence, 253 residues long: (S)-2-haloacid dehalogenase (253 aa).

Catalysis depends on D8, which acts as the Nucleophile. Residues 9-10, R39, and 114-115 each bind an (S)-2-haloacid; these read AY and SN. The interval 171-176 is important for catalytic activity; the sequence is SSNGFD.

It belongs to the HAD-like hydrolase superfamily. S-2-haloalkanoic acid dehalogenase family. Homodimer.

It catalyses the reaction an (S)-2-haloacid + H2O = a (2R)-2-hydroxycarboxylate + a halide anion + H(+). It carries out the reaction (S)-2-chloropropanoate + H2O = (R)-lactate + chloride + H(+). Functionally, catalyzes the hydrolytic dehalogenation of small (S)-2-haloalkanoic acids to yield the corresponding (R)-2-hydroxyalkanoic acids. Acts on acids of short chain lengths, C(2) to C(4), with inversion of configuration at C-2. Active with 2-halogenated carboxylic acids and converts only the S-isomer (or L-isomer) of 2-chloropropionic acid with inversion of configuration to produce R-lactate (or D-isomer). In Xanthobacter autotrophicus, this protein is (S)-2-haloacid dehalogenase.